Reading from the N-terminus, the 234-residue chain is Lactate utilization protein C 1 (234 aa).

This sequence belongs to the LutC/YkgG family.

Functionally, is involved in L-lactate degradation and allows cells to grow with lactate as the sole carbon source. The sequence is that of Lactate utilization protein C 1 from Bacillus mycoides (strain KBAB4) (Bacillus weihenstephanensis).